Reading from the N-terminus, the 214-residue chain is C-type lectin domain family 2 member L (214 aa).

The interval 1–56 is disordered; the sequence is MEPAREPPSRARPPPPLAARPAPAPAAPRPRSPAEAEARGPEGLLRRSGSGYEGST. Pro residues predominate over residues 10–31; the sequence is RARPPPPLAARPAPAPAAPRPR. Position 32 is a phosphoserine (S32). A helical membrane pass occupies residues 69 to 89; sequence LLLGAIAVLLFAILVVMSILA. Positions 107–209 constitute a C-type lectin domain; that stretch reads YGRKCYFFSE…CLMTRPWVCS (103 aa). 2 disulfides stabilise this stretch: C128–C208 and C187–C200.

It localises to the membrane. The sequence is that of C-type lectin domain family 2 member L (CLEC2L) from Homo sapiens (Human).